Consider the following 116-residue polypeptide: Putative pterin-4-alpha-carbinolamine dehydratase 1 (116 aa).

It belongs to the pterin-4-alpha-carbinolamine dehydratase family.

The enzyme catalyses (4aS,6R)-4a-hydroxy-L-erythro-5,6,7,8-tetrahydrobiopterin = (6R)-L-erythro-6,7-dihydrobiopterin + H2O. The chain is Putative pterin-4-alpha-carbinolamine dehydratase 1 from Cupriavidus pinatubonensis (strain JMP 134 / LMG 1197) (Cupriavidus necator (strain JMP 134)).